The following is a 779-amino-acid chain: Probable ATP-dependent RNA helicase DHX40 (779 aa).

The tract at residues 1–53 (MSRFPAVAGRAPRRQEEGERPVELQEERPSAVRIADREEKGCTSQEGGTTPTF) is disordered. A compositionally biased stretch (basic and acidic residues) spans 13 to 41 (RRQEEGERPVELQEERPSAVRIADREEKG). Positions 42–53 (CTSQEGGTTPTF) are enriched in polar residues. The Helicase ATP-binding domain maps to 63-231 (IQAVRDNSFL…FGNCPIFDIP (169 aa)). Residue 76 to 83 (GNTGSGKT) participates in ATP binding. A DEAH box motif is present at residues 173-176 (DEAH). The 180-residue stretch at 263–442 (TMDIHLNEMA…SVVLTLKCLA (180 aa)) folds into the Helicase C-terminal domain.

Belongs to the DEAD box helicase family. DEAH subfamily.

The catalysed reaction is ATP + H2O = ADP + phosphate + H(+). In terms of biological role, probable ATP-dependent RNA helicase. This is Probable ATP-dependent RNA helicase DHX40 (Dhx40) from Rattus norvegicus (Rat).